Consider the following 388-residue polypeptide: Glucose-6-phosphate/phosphate translocator 2, chloroplastic (388 aa).

A chloroplast-targeting transit peptide spans 1–68; sequence MLSSIKPSSS…SASNFKREVK (68 aa). 8 helical membrane-spanning segments follow: residues 95–115, 122–142, 158–178, 211–231, 233–253, 281–301, 305–325, and 358–378; these read LKIG…NIYN, FPYP…MMLV, FWKT…AATV, FPLP…LAAI, ELNF…AFVF, LVIL…AAGW, VSQV…FYHL, and IIIF…IAIF. The EamA domain occupies 113 to 231; sequence IYNKKVLNAF…IIGGCALAAI (119 aa).

The protein belongs to the TPT transporter family. GPT (TC 2.A.7.9) subfamily. As to expression, expressed in seeds, flowers, stamens, and rosette leaves, with highest levels found in sepals and senescing leaves.

The protein localises to the plastid. It localises to the chloroplast membrane. Its function is as follows. Glucose 6-phosphate (Glc6P) transporter. Also transports inorganic phosphate, 3-phosphoglycerate, triose phosphates and, to a leser extent, phosphoenolpyruvate. Responsible for the transport of Glc6P into plastids of heterotrophic tissues where it can be used as a carbon source for starch biosynthesis, as substrate for fatty acid biosynthesis or as substrate for NADPH generation via the oxidative pentose phosphate pathway (OPPP). Required for dynamic acclimation of photosynthesis and partitioning of Glc6P between the chloroplast and the cytosol. May modulate the sensing of sugar status during early seedling development. The chain is Glucose-6-phosphate/phosphate translocator 2, chloroplastic from Arabidopsis thaliana (Mouse-ear cress).